A 160-amino-acid polypeptide reads, in one-letter code: Invasion protein IagB (160 aa).

Positions 1 to 19 (MHYFFIIVIWLLSINTAWA) are cleaved as a signal peptide.

The protein belongs to the IagB/IpgF/P19 family.

This is Invasion protein IagB (iagB) from Salmonella typhi.